The following is a 131-amino-acid chain: MKKQGIFNSQISYFVASMGHKDMLSIVDMGYPIPKDATFVDLVFDKGIPNFIDTIKMVLYELEVEKVIIAGEMEVNNLKNYQKVIDIFSNIEIEKKSHEEFKDIAKNSKFFIRTGECTPFSNIILVSGVIF.

The active-site Proton donor is His20. Residues Asp28, His98, and 120 to 122 (FSN) each bind substrate.

This sequence belongs to the RbsD / FucU family. RbsD subfamily. In terms of assembly, homodecamer.

It is found in the cytoplasm. It carries out the reaction beta-D-ribopyranose = beta-D-ribofuranose. It functions in the pathway carbohydrate metabolism; D-ribose degradation; D-ribose 5-phosphate from beta-D-ribopyranose: step 1/2. In terms of biological role, catalyzes the interconversion of beta-pyran and beta-furan forms of D-ribose. This Petrotoga mobilis (strain DSM 10674 / SJ95) protein is D-ribose pyranase.